Reading from the N-terminus, the 432-residue chain is Enolase (432 aa).

Q167 contributes to the (2R)-2-phosphoglycerate binding site. The active-site Proton donor is E209. Residues D246, E287, and D314 each coordinate Mg(2+). The (2R)-2-phosphoglycerate site is built by K339, R368, S369, and K390. K339 functions as the Proton acceptor in the catalytic mechanism.

The protein belongs to the enolase family. Requires Mg(2+) as cofactor.

It is found in the cytoplasm. The protein localises to the secreted. Its subcellular location is the cell surface. The enzyme catalyses (2R)-2-phosphoglycerate = phosphoenolpyruvate + H2O. The protein operates within carbohydrate degradation; glycolysis; pyruvate from D-glyceraldehyde 3-phosphate: step 4/5. In terms of biological role, catalyzes the reversible conversion of 2-phosphoglycerate (2-PG) into phosphoenolpyruvate (PEP). It is essential for the degradation of carbohydrates via glycolysis. The protein is Enolase of Prochlorococcus marinus (strain MIT 9211).